Reading from the N-terminus, the 77-residue chain is Small nuclear ribonucleoprotein G (77 aa).

Residues 2 to 77 form the Sm domain; sequence VSTPELKKYM…IISLEALDAI (76 aa).

This sequence belongs to the snRNP Sm proteins family. As to quaternary structure, component of the Sm core complex, present in spliceosomal snRNP U1, U2, U4/U6 and U5. The core complex contains SMB1, SMD1, SMD2, SMD3, SME1, SMX3 and SMX2 (Sm proteins B, D1, D2, D3, E, F and G, respectively), and is probably a heptameric ring structure. SMX2 specifically interacts with SME1. Belongs to the CWC complex (or CEF1-associated complex), a spliceosome sub-complex reminiscent of a late-stage spliceosome composed of the U2, U5 and U6 snRNAs and at least BUD13, BUD31, BRR2, CDC40, CEF1, CLF1, CUS1, CWC2, CWC15, CWC21, CWC22, CWC23, CWC24, CWC25, CWC27, ECM2, HSH155, IST3, ISY1, LEA1, MSL1, NTC20, PRP8, PRP9, PRP11, PRP19, PRP21, PRP22, PRP45, PRP46, SLU7, SMB1, SMD1, SMD2, SMD3, SMX2, SMX3, SNT309, SNU114, SPP2, SYF1, SYF2, RSE1 and YJU2. Component of the U4/U6-U5 tri-snRNP complex composed of the U4, U6 and U5 snRNAs and at least PRP3, PRP4, PRP6, PRP8, PRP18, PRP31, PRP38, SNU13, SNU23, SNU66, SNU114, SPP381, SMB1, SMD1, SMD2, SMD3, SMX2, SMX3, LSM2, LSM3, LSM4, LSM5, LSM6, LSM7, LSM8, BRR2 and DIB1.

Its subcellular location is the nucleus. The protein resides in the cytoplasm. In terms of biological role, plays a role in pre-mRNA splicing as a core component of the spliceosomal U1, U2, U4 and U5 small nuclear ribonucleoproteins (snRNPs), the building blocks of the spliceosome. This Saccharomyces cerevisiae (strain ATCC 204508 / S288c) (Baker's yeast) protein is Small nuclear ribonucleoprotein G (SMX2).